The primary structure comprises 160 residues: Cyclic pyranopterin monophosphate synthase (160 aa).

Residues 74–76 (LSH) and 112–113 (ME) each bind substrate. Asp-127 is an active-site residue.

Belongs to the MoaC family. In terms of assembly, homohexamer; trimer of dimers.

The enzyme catalyses (8S)-3',8-cyclo-7,8-dihydroguanosine 5'-triphosphate = cyclic pyranopterin phosphate + diphosphate. Its pathway is cofactor biosynthesis; molybdopterin biosynthesis. Its function is as follows. Catalyzes the conversion of (8S)-3',8-cyclo-7,8-dihydroguanosine 5'-triphosphate to cyclic pyranopterin monophosphate (cPMP). The chain is Cyclic pyranopterin monophosphate synthase from Geobacter metallireducens (strain ATCC 53774 / DSM 7210 / GS-15).